The sequence spans 593 residues: Inactive metallocarboxypeptidase ECM14 (593 aa).

Positions 1–22 (MHVTVQLSLLLSLASSLPLVSA) are cleaved as a signal peptide. A propeptide spanning residues 23–175 (IPQHDGQAYT…QAIYESYPKN (153 aa)) is cleaved from the precursor. Disordered stretches follow at residues 75–98 (VPQR…KAPA) and 172–202 (YPKN…SQPH). A compositionally biased stretch (basic and acidic residues) spans 78 to 88 (RGKDSETKTGK). Residues 188–199 (RRFSPSASTPES) are compositionally biased toward polar residues. The region spanning 211–537 (DYQPLSVLLP…HAVVAMGKFL (327 aa)) is the Peptidase M14 domain. The Zn(2+) site is built by His276 and Glu279. Substrate-binding positions include 276–279 (HARE), Arg334, and 351–352 (DR). Cys345 and Cys368 are joined by a disulfide. N-linked (GlcNAc...) asparagine glycosylation occurs at Asn361. A Zn(2+)-binding site is contributed by His408. 409-410 (SY) lines the substrate pocket. The interval 548–593 (DEPHAGEQTQDNSYDEDGDNLFRAQGGDPQVRFTRRNIGAHDDDSE) is disordered.

Belongs to the peptidase M14 family. Requires Zn(2+) as cofactor.

The protein localises to the vacuole. Its subcellular location is the secreted. Functionally, inactive carboxypeptidase that may play a role in cell wall organization and biogenesis. This is Inactive metallocarboxypeptidase ECM14 (ECM14) from Arthroderma otae (strain ATCC MYA-4605 / CBS 113480) (Microsporum canis).